Here is a 381-residue protein sequence, read N- to C-terminus: MSLNMFWFLPTHGDGHYLGTEEGSRPVDHGYLQQIAQAADRLGYTGVLIPTGRSCEDAWLVAASMIPVTQRLKFLVALRPSVTSPTVAARQAATLDRLSNGRALFNLVTGSDPQELAGDGVFLDHSERYEASAEFTQVWRRLLQRETVDFNGKHIHVRGAKLLFPAIQQPYPPLYFGGSSDVAQELAAEQVDLYLTWGEPPELVKEKIEQVRAKAAAHGRKIRFGIRLHVIVRETNDEAWQAAERLISHLDDETIAKAQAAFARTDSVGQQRMAALHNGKRDNLEISPNLWAGVGLVRGGAGTALVGDGPTVAARINEYAALGIDSFVLSGYPHLEEAYRVGELLFPLLDVAIPEIPQPQPLNPQGEAVANDFIPRKVAQS.

The protein belongs to the SsuD family. As to quaternary structure, homotetramer.

It catalyses the reaction an alkanesulfonate + FMNH2 + O2 = an aldehyde + FMN + sulfite + H2O + 2 H(+). Catalyzes the desulfonation of aliphatic sulfonates. The chain is Alkanesulfonate monooxygenase from Escherichia coli O9:H4 (strain HS).